A 309-amino-acid polypeptide reads, in one-letter code: Sporulation sigma-E factor-processing peptidase (309 aa).

The next 5 membrane-spanning stretches (helical) occupy residues 7 to 27 (VIWL…AFIL), 36 to 55 (LVGG…TPFS), 61 to 78 (PAGK…TFGF), 88 to 105 (LFSF…IIGA), and 130 to 147 (PISW…WFFS). D183 is an active-site residue.

Belongs to the peptidase U4 family. In terms of assembly, self-associates. Interacts with SigE. Interacts with SpoIIR.

The protein resides in the cell membrane. Its function is as follows. Probable aspartic protease that is responsible for the proteolytic cleavage of the RNA polymerase sigma E factor (SigE/spoIIGB) to yield the active peptide in the mother cell during sporulation. Responds to a signal from the forespore that is triggered by the extracellular signal protein SpoIIR. This Bacillus subtilis (strain 168) protein is Sporulation sigma-E factor-processing peptidase (spoIIGA).